The sequence spans 662 residues: MDKKKLIEELVEELNKYAYEYYVLGNSSVTDKDYDKKYYELVDLEKETGYKLPYSPTQRVGDVILPEFKKYTHKARLWSLDKAQTLEEIREWHNRNVKFLEEYNRTSDEELPPLKYILTKKFDGLTINLSYDENGVLITGATRGTGAIGEDVTAQVKTIKSIPLKIDCHDFLEIHGEAIMTTEAFEKYNSEADTPLKNLRNGAAGALRNLNVAETAKRNLSAFFYDVGYKEGAPFKTYMEMLNFIKTKGFPMDDYIRECKTLDEIQKEIDYIRDIRFDLNYDIDGLVIAIDDIRTRELLGYTVKFPKWAIAYKFEAQEATTKLLDVEWNVGRSGRVSPTAILEPVELAGVTVKRATLNNMDDIARKGVRLGAEVFVRRSNDVIPEIMGVVPESLEGTKEIEEPKVCPACGAHLVHEGVHIYCENTLGCKPQMVKTIVHFAGREAMNIAGFSERTAEQLFEKLDIRDISDLYKLEYEKLLDLDKFGPKKAQNLLDAIEKSKDCTLEAFLYSLGIPNVGVKTAKDLVKRFESLENLEKATFEELVSVQDVGDIVARSIIEFFKEERTLKVINELLSLGVNPHYEKKEVLESPFMGKTVVVTGTLENYSRTSIKEKLESLGAKVSGSVSKKTDFVIAGEAAGSKYDKAKSLGITILSEEEFENMI.

NAD(+)-binding positions include 31–35 (DKDYD) and 79–80 (SL). The active-site N6-AMP-lysine intermediate is Lys121. Residues Arg143, Glu177, and Lys313 each coordinate NAD(+). Zn(2+)-binding residues include Cys406, Cys409, Cys422, and Cys428. Residues 586–662 (VLESPFMGKT…LSEEEFENMI (77 aa)) form the BRCT domain.

Belongs to the NAD-dependent DNA ligase family. LigA subfamily. The cofactor is Mg(2+). Requires Mn(2+) as cofactor.

It carries out the reaction NAD(+) + (deoxyribonucleotide)n-3'-hydroxyl + 5'-phospho-(deoxyribonucleotide)m = (deoxyribonucleotide)n+m + AMP + beta-nicotinamide D-nucleotide.. In terms of biological role, DNA ligase that catalyzes the formation of phosphodiester linkages between 5'-phosphoryl and 3'-hydroxyl groups in double-stranded DNA using NAD as a coenzyme and as the energy source for the reaction. It is essential for DNA replication and repair of damaged DNA. The sequence is that of DNA ligase from Clostridium perfringens (strain SM101 / Type A).